A 364-amino-acid polypeptide reads, in one-letter code: V-type proton ATPase subunit d (364 aa).

Belongs to the V-ATPase V0D/AC39 subunit family. V-ATPase is a heteromultimeric enzyme composed of a peripheral catalytic V1 complex (components A to H) attached to an integral membrane V0 proton pore complex (components: a, c, c', c'', d, e, f and VOA1).

The protein localises to the vacuole membrane. Subunit of the V0 complex of vacuolar(H+)-ATPase (V-ATPase), a multisubunit enzyme composed of a peripheral complex (V1) that hydrolyzes ATP and a membrane integral complex (V0) that translocates protons. V-ATPase is responsible for acidifying and maintaining the pH of intracellular compartments. This subunit is a non-integral membrane component of the membrane pore domain and is required for proper assembly of the V0 sector. Might be involved in the regulated assembly of V1 subunits onto the membrane sector or alternatively may prevent the passage of protons through V0 pores. In Neurospora crassa (strain ATCC 24698 / 74-OR23-1A / CBS 708.71 / DSM 1257 / FGSC 987), this protein is V-type proton ATPase subunit d.